The chain runs to 283 residues: Pantothenate synthetase (283 aa).

30–37 (MGNLHDGH) provides a ligand contact to ATP. Histidine 37 acts as the Proton donor in catalysis. Residue glutamine 61 participates in (R)-pantoate binding. Glutamine 61 is a binding site for beta-alanine. 149–152 (GEKD) provides a ligand contact to ATP. Glutamine 155 is a binding site for (R)-pantoate. 186–189 (LSSR) is a binding site for ATP.

The protein belongs to the pantothenate synthetase family. Homodimer.

Its subcellular location is the cytoplasm. The enzyme catalyses (R)-pantoate + beta-alanine + ATP = (R)-pantothenate + AMP + diphosphate + H(+). The protein operates within cofactor biosynthesis; (R)-pantothenate biosynthesis; (R)-pantothenate from (R)-pantoate and beta-alanine: step 1/1. Its function is as follows. Catalyzes the condensation of pantoate with beta-alanine in an ATP-dependent reaction via a pantoyl-adenylate intermediate. The protein is Pantothenate synthetase of Escherichia fergusonii (strain ATCC 35469 / DSM 13698 / CCUG 18766 / IAM 14443 / JCM 21226 / LMG 7866 / NBRC 102419 / NCTC 12128 / CDC 0568-73).